The sequence spans 294 residues: 4-hydroxy-tetrahydrodipicolinate synthase (294 aa).

T44 lines the pyruvate pocket. Residue Y132 is the Proton donor/acceptor of the active site. The active-site Schiff-base intermediate with substrate is K161. I206 contributes to the pyruvate binding site.

The protein belongs to the DapA family. As to quaternary structure, homotetramer; dimer of dimers.

It is found in the cytoplasm. The catalysed reaction is L-aspartate 4-semialdehyde + pyruvate = (2S,4S)-4-hydroxy-2,3,4,5-tetrahydrodipicolinate + H2O + H(+). Its pathway is amino-acid biosynthesis; L-lysine biosynthesis via DAP pathway; (S)-tetrahydrodipicolinate from L-aspartate: step 3/4. In terms of biological role, catalyzes the condensation of (S)-aspartate-beta-semialdehyde [(S)-ASA] and pyruvate to 4-hydroxy-tetrahydrodipicolinate (HTPA). The protein is 4-hydroxy-tetrahydrodipicolinate synthase of Thermotoga petrophila (strain ATCC BAA-488 / DSM 13995 / JCM 10881 / RKU-1).